Reading from the N-terminus, the 374-residue chain is uncharacterized protein (374 aa).

The a divalent metal cation site is built by D158, H160, D190, N221, H312, and H314.

It belongs to the metallophosphoesterase superfamily. Requires a divalent metal cation as cofactor.

This is an uncharacterized protein from Campylobacter jejuni subsp. jejuni serotype O:2 (strain ATCC 700819 / NCTC 11168).